We begin with the raw amino-acid sequence, 610 residues long: UvrABC system protein C (610 aa).

The 79-residue stretch at 16 to 94 folds into the GIY-YIG domain; that stretch reads SQPGVYRMYD…IKLYQPRYNV (79 aa). Residues 204–239 form the UVR domain; the sequence is DQVLTQLIARMEKASQDLAFEEAARIRDQIQAVRRV.

This sequence belongs to the UvrC family. Interacts with UvrB in an incision complex.

The protein localises to the cytoplasm. Its function is as follows. The UvrABC repair system catalyzes the recognition and processing of DNA lesions. UvrC both incises the 5' and 3' sides of the lesion. The N-terminal half is responsible for the 3' incision and the C-terminal half is responsible for the 5' incision. The polypeptide is UvrABC system protein C (Salmonella gallinarum (strain 287/91 / NCTC 13346)).